A 199-amino-acid chain; its full sequence is MSDNLNMTAPGAGTGYSGDIFDRLLRERIIFLGSQVDDEIANKLCAQILLLSAEDPTRDISLYINSPGGSVTAGMAIYDTMKYSPCDIATYGMGLAASMGQFLLSGGTPGKRYALPHARIMMHQPSAGVGGTAADIAIQAEQFAQTKREMAKLIAEHTGQTFEQVTKDSDRDRWFTAEQAKEYGLVDHVITLAEGPISN.

The Nucleophile role is filled by Ser-98. Residue His-123 is part of the active site.

Belongs to the peptidase S14 family. Fourteen ClpP subunits assemble into 2 heptameric rings which stack back to back to give a disk-like structure with a central cavity, resembling the structure of eukaryotic proteasomes.

Its subcellular location is the cytoplasm. The enzyme catalyses Hydrolysis of proteins to small peptides in the presence of ATP and magnesium. alpha-casein is the usual test substrate. In the absence of ATP, only oligopeptides shorter than five residues are hydrolyzed (such as succinyl-Leu-Tyr-|-NHMec, and Leu-Tyr-Leu-|-Tyr-Trp, in which cleavage of the -Tyr-|-Leu- and -Tyr-|-Trp bonds also occurs).. Cleaves peptides in various proteins in a process that requires ATP hydrolysis. Has a chymotrypsin-like activity. Plays a major role in the degradation of misfolded proteins. The chain is ATP-dependent Clp protease proteolytic subunit 2 from Corynebacterium efficiens (strain DSM 44549 / YS-314 / AJ 12310 / JCM 11189 / NBRC 100395).